The following is a 495-amino-acid chain: Probable aspartic-type endopeptidase OPSB (495 aa).

The first 19 residues, 1–19 (MRGDSFIWSLATAIPLLST), serve as a signal peptide directing secretion. Residues 73–408 (YFCNLTLGTP…DLDNNEISIA (336 aa)) form the Peptidase A1 domain. An N-linked (GlcNAc...) asparagine glycan is attached at N76. Residue D91 is part of the active site. N-linked (GlcNAc...) asparagine glycosylation occurs at N136. The active site involves D290. An N-linked (GlcNAc...) asparagine glycan is attached at N413. The segment at 447 to 470 (ATGLPGVETGVPGSRPPSSKAAGQ) is disordered. Residue A467 is the site of GPI-anchor amidated alanine attachment. The propeptide at 468–495 (AGQAKRPDFVLGVAAVGLAGAGMLFAAM) is removed in mature form.

This sequence belongs to the peptidase A1 family.

The protein localises to the cell membrane. Functionally, probable GPI-anchored aspartic-type endopeptidase which contributes to virulence. The chain is Probable aspartic-type endopeptidase OPSB (OPSB) from Arthroderma benhamiae (strain ATCC MYA-4681 / CBS 112371) (Trichophyton mentagrophytes).